The following is a 109-amino-acid chain: U-scoloptoxin(16)-Ssd1a (109 aa).

A signal peptide spans 1–23 (MTTSATVIIMVLCVGSLVIFSEG).

Post-translationally, contains 4 disulfide bonds. In terms of tissue distribution, expressed by the venom gland.

The protein localises to the secreted. The polypeptide is U-scoloptoxin(16)-Ssd1a (Scolopendra dehaani (Thai centipede)).